The sequence spans 219 residues: Peptide methionine sulfoxide reductase MsrA (219 aa).

Cys58 is an active-site residue.

This sequence belongs to the MsrA Met sulfoxide reductase family.

The enzyme catalyses L-methionyl-[protein] + [thioredoxin]-disulfide + H2O = L-methionyl-(S)-S-oxide-[protein] + [thioredoxin]-dithiol. The catalysed reaction is [thioredoxin]-disulfide + L-methionine + H2O = L-methionine (S)-S-oxide + [thioredoxin]-dithiol. Functionally, has an important function as a repair enzyme for proteins that have been inactivated by oxidation. Catalyzes the reversible oxidation-reduction of methionine sulfoxide in proteins to methionine. The protein is Peptide methionine sulfoxide reductase MsrA of Ectopseudomonas mendocina (strain ymp) (Pseudomonas mendocina).